We begin with the raw amino-acid sequence, 93 residues long: Small ribosomal subunit protein uS19 (93 aa).

This sequence belongs to the universal ribosomal protein uS19 family.

Protein S19 forms a complex with S13 that binds strongly to the 16S ribosomal RNA. The protein is Small ribosomal subunit protein uS19 of Nitratidesulfovibrio vulgaris (strain DSM 19637 / Miyazaki F) (Desulfovibrio vulgaris).